The following is a 269-amino-acid chain: Sororin (269 aa).

3 disordered regions span residues 1–39, 56–110, and 146–169; these read MSEGKKRSRGGLAIISPPKRRSQRKSTSDSPIPEPIMKR, VNTG…PKIN, and SLNSSSSLYSPTRKTDSSDTSTPN. Residues 57–66 are compositionally biased toward polar residues; it reads NTGSQSTPKV. The KEN box signature appears at 85-87; that stretch reads KEN. Over residues 146-155 the composition is skewed to low complexity; that stretch reads SLNSSSSLYS. Positions 180 to 182 match the FGF motif motif; that stretch reads FGF. The C-terminal Sororin domain stretch occupies residues 247 to 269; the sequence is LDEWAAFMNAEFEEAEKFDLTVE.

This sequence belongs to the sororin family. In terms of assembly, interacts with the APC/C complex. Interacts with the chromatin-bound cohesin complex; the interaction is indirect, occurs after DNA replication and requires acetylation of the cohesin component smc3. Interacts (via the FGF motif) with pds5a and pds5b; the interaction is direct and prevents the interaction of pds5a with wapl. Ubiquitinated by the APC/C complex in G1, leading to its degradation.

It localises to the nucleus. It is found in the chromosome. The protein localises to the cytoplasm. Functionally, regulator of sister chromatid cohesion in mitosis stabilizing cohesin complex association with chromatin. May antagonize the action of wapl which stimulates cohesin dissociation from chromatin. Cohesion ensures that chromosome partitioning is accurate in both meiotic and mitotic cells and plays an important role in DNA repair. Required for efficient DNA double-stranded break repair. In Xenopus laevis (African clawed frog), this protein is Sororin (cdca5-a).